Here is a 539-residue protein sequence, read N- to C-terminus: Glucans biosynthesis protein D (539 aa).

Residues 1–29 (MNRRNLLKASMALAAYGSVSASGLFAARA) constitute a signal peptide (tat-type signal).

This sequence belongs to the OpgD/OpgG family. Predicted to be exported by the Tat system. The position of the signal peptide cleavage has not been experimentally proven.

It is found in the periplasm. It functions in the pathway glycan metabolism; osmoregulated periplasmic glucan (OPG) biosynthesis. Probably involved in the control of the structural glucose backbone of osmoregulated periplasmic glucans (OPGs). This Pseudomonas syringae pv. syringae (strain B728a) protein is Glucans biosynthesis protein D.